A 220-amino-acid polypeptide reads, in one-letter code: Imidazoleglycerol-phosphate dehydratase (220 aa).

Substrate-binding positions include E14, 64 to 72, 90 to 94, R116, and R138; these read HMIHALAKH and HHTTE. Mn(2+) contacts are provided by H64, H90, H91, and E94. Mn(2+)-binding residues include H162, H186, H187, and E190. Substrate-binding positions include 186–194 and 214–216; these read HHRSESAFK and STK.

Belongs to the imidazoleglycerol-phosphate dehydratase family. Mn(2+) is required as a cofactor.

It catalyses the reaction D-erythro-1-(imidazol-4-yl)glycerol 3-phosphate = 3-(imidazol-4-yl)-2-oxopropyl phosphate + H2O. Its pathway is amino-acid biosynthesis; L-histidine biosynthesis; L-histidine from 5-phospho-alpha-D-ribose 1-diphosphate: step 6/9. The polypeptide is Imidazoleglycerol-phosphate dehydratase (Saccharomyces cerevisiae (strain ATCC 204508 / S288c) (Baker's yeast)).